A 334-amino-acid polypeptide reads, in one-letter code: Sucrose operon repressor (334 aa).

In terms of domain architecture, HTH lacI-type spans 6 to 63; it reads VTIKDIAELAGVSKATASLVLNGRGKELRVAQETRERVLAIAREQHYQPSIHARSLRD. Positions 8–27 form a DNA-binding region, H-T-H motif; that stretch reads IKDIAELAGVSKATASLVLN.

Functionally, repressor for the scr operon. Binds D-fructose as an inducer. The protein is Sucrose operon repressor (scrR) of Klebsiella pneumoniae.